Here is a 664-residue protein sequence, read N- to C-terminus: DNA ligase (664 aa).

Residues 32-36 (DAEYD), 81-82 (SL), and Glu113 each bind NAD(+). The active-site N6-AMP-lysine intermediate is Lys115. Arg136, Glu173, Lys289, and Lys313 together coordinate NAD(+). Positions 407, 410, 425, and 431 each coordinate Zn(2+). The region spanning 586-664 (ASEQPFAGKT…EEQLQAALQS (79 aa)) is the BRCT domain.

Belongs to the NAD-dependent DNA ligase family. LigA subfamily. Requires Mg(2+) as cofactor. Mn(2+) is required as a cofactor.

The enzyme catalyses NAD(+) + (deoxyribonucleotide)n-3'-hydroxyl + 5'-phospho-(deoxyribonucleotide)m = (deoxyribonucleotide)n+m + AMP + beta-nicotinamide D-nucleotide.. Functionally, DNA ligase that catalyzes the formation of phosphodiester linkages between 5'-phosphoryl and 3'-hydroxyl groups in double-stranded DNA using NAD as a coenzyme and as the energy source for the reaction. It is essential for DNA replication and repair of damaged DNA. In Aeromonas salmonicida (strain A449), this protein is DNA ligase.